Reading from the N-terminus, the 287-residue chain is MVEFAFDIKHLFPQSIIRVQAHSLRPKVTQCRRYAQTERGKSTMTSCRLSEILNIMGKLSADAQGLCHAVTSADKLASDQVVYLMADKAAGHWEITGLLKVGTKDLFVFDQGGCYRRLNQTPAILDFYVHESRQRCGQGKLLFEWMLEKQGWSAHKCTVDRPSNKMLAFMAKHYGLVRTIPQGNNFVLYEGFFDDPITTCKSASGLQATGSGCRSRSQGHYVRQEQDQAQIKHGQANRNTVQNDANSGPFRQDQKIVVGTSIYRRRWKSPRTLARAGCREVSGGRRF.

The 192-residue stretch at 2 to 193 (VEFAFDIKHL…NNFVLYEGFF (192 aa)) folds into the N-acetyltransferase domain. Acetyl-CoA is bound by residues 127-140 (FYVH…GQGK) and 163-172 (SNKMLAFMAK).

The protein belongs to the acetyltransferase ATAT1 family.

It localises to the midbody. It is found in the midbody ring. It catalyses the reaction L-lysyl-[alpha-tubulin] + acetyl-CoA = N(6)-acetyl-L-lysyl-[alpha-tubulin] + CoA + H(+). In terms of biological role, specifically acetylates 'Lys-40' in alpha-tubulin on the lumenal side of microtubules. Promotes microtubule destabilization and accelerates microtubule dynamics; this activity may be independent of acetylation activity. Acetylates alpha-tubulin with a slow enzymatic rate, due to a catalytic site that is not optimized for acetyl transfer. Enters the microtubule through each end and diffuses quickly throughout the lumen of microtubules. Acetylates only long/old microtubules because of its slow acetylation rate since it does not have time to act on dynamically unstable microtubules before the enzyme is released. Main acetyltransferase responsible for alpha-tubulin 'Lys-40' acetylation in germline cells during the early stages of oogenesis. Required for normal egg chamber separation. This chain is Alpha-tubulin N-acetyltransferase 2, found in Drosophila melanogaster (Fruit fly).